The following is a 168-amino-acid chain: MQMVINEMKQKAIYPGTFDPVTNGHIDIITRASTIFPELIVAVASNKNKRPYLSWETRISLLEESVGHLTGVRVVGFDNLLIDFVLEQSAGIILRGLRAVSDFEYEFQLAGMNRKLSKKVETLFLTPAEHLMYISSTLVREIAALNGDISQFVPPNVVRELKKRQNEI.

A substrate-binding site is contributed by Thr17. Residues 17–18 (TF) and His25 contribute to the ATP site. Residues Lys49, Leu81, and Arg95 each contribute to the substrate site. ATP-binding positions include 96–98 (GLR), Glu106, and 131–137 (LMYISST).

Belongs to the bacterial CoaD family. Homohexamer. The cofactor is Mg(2+).

The protein localises to the cytoplasm. It carries out the reaction (R)-4'-phosphopantetheine + ATP + H(+) = 3'-dephospho-CoA + diphosphate. It participates in cofactor biosynthesis; coenzyme A biosynthesis; CoA from (R)-pantothenate: step 4/5. Functionally, reversibly transfers an adenylyl group from ATP to 4'-phosphopantetheine, yielding dephospho-CoA (dPCoA) and pyrophosphate. This is Phosphopantetheine adenylyltransferase from Legionella pneumophila (strain Paris).